A 104-amino-acid chain; its full sequence is MTYHEMYRSTTLGTTLREALDEMLAHNLLQPGMDHKVMQKFDQCISNALAKRVKNRLSLRGHLNTYRNCDNVWTLVMNDVEIKDSSAIMTVDKVSLNSPLICKI.

The protein belongs to the TFIIA subunit 2 family. As to quaternary structure, TFIIA is a heterodimer of the large unprocessed subunit 1 and a small subunit gamma.

The protein resides in the nucleus. In terms of biological role, TFIIA is a component of the transcription machinery of RNA polymerase II and plays an important role in transcriptional activation. TFIIA in a complex with TBP mediates transcriptional activity. The protein is Transcription initiation factor IIA subunit 2 of Schistosoma mansoni (Blood fluke).